The primary structure comprises 445 residues: NAD-specific glutamate dehydrogenase (445 aa).

Lysine 124 is an active-site residue.

Belongs to the Glu/Leu/Phe/Val dehydrogenases family. Homohexamer.

The protein resides in the cell surface. The enzyme catalyses L-glutamate + NAD(+) + H2O = 2-oxoglutarate + NH4(+) + NADH + H(+). Functionally, probably involved in degradation rather than biosynthesis of glutamate. This chain is NAD-specific glutamate dehydrogenase (gdh), found in Porphyromonas gingivalis (strain ATCC 33277 / DSM 20709 / CIP 103683 / JCM 12257 / NCTC 11834 / 2561).